The primary structure comprises 778 residues: Lon protease (778 aa).

Residues 8 to 202 form the Lon N-terminal domain; sequence LPLIPLRGLI…NVLTVIKDEL (195 aa). Residue 354 to 361 coordinates ATP; the sequence is GPPGVGKT. Residues 591–772 enclose the Lon proteolytic domain; the sequence is EDKIGVVTGM…DTVLENALIG (182 aa). Active-site residues include S678 and K721.

This sequence belongs to the peptidase S16 family. Homohexamer. Organized in a ring with a central cavity.

The protein localises to the cytoplasm. It carries out the reaction Hydrolysis of proteins in presence of ATP.. Its function is as follows. ATP-dependent serine protease that mediates the selective degradation of mutant and abnormal proteins as well as certain short-lived regulatory proteins. Required for cellular homeostasis and for survival from DNA damage and developmental changes induced by stress. Degrades polypeptides processively to yield small peptide fragments that are 5 to 10 amino acids long. Binds to DNA in a double-stranded, site-specific manner. The chain is Lon protease from Clostridium acetobutylicum (strain ATCC 824 / DSM 792 / JCM 1419 / IAM 19013 / LMG 5710 / NBRC 13948 / NRRL B-527 / VKM B-1787 / 2291 / W).